The primary structure comprises 375 residues: Growth/differentiation factor 8 (375 aa).

The first 18 residues, 1–18 (MQKLQISVYIYLFMLIVA), serve as a signal peptide directing secretion. A propeptide spanning residues 19–266 (GPVDLNEKSE…VTDTPKRSRR (248 aa)) is cleaved from the precursor. Residues asparagine 47 and asparagine 71 are each glycosylated (N-linked (GlcNAc...) asparagine). 4 disulfides stabilise this stretch: cysteine 272/cysteine 282, cysteine 281/cysteine 340, cysteine 309/cysteine 372, and cysteine 313/cysteine 374.

It belongs to the TGF-beta family. As to quaternary structure, homodimer; disulfide-linked. Interacts with WFIKKN2, leading to inhibit its activity. Interacts with FSTL3. Synthesized as large precursor molecule that undergoes proteolytic cleavage to generate an N-terminal propeptide and a disulfide linked C-terminal dimer, which is the biologically active molecule. The circulating form consists of a latent complex of the C-terminal dimer and other proteins, including its propeptide, which maintain the C-terminal dimer in a latent, inactive state. Ligand activation requires additional cleavage of the prodomain by a tolloid-like metalloproteinase.

It localises to the secreted. In terms of biological role, acts specifically as a negative regulator of skeletal muscle growth. In Taurotragus derbianus (Giant eland), this protein is Growth/differentiation factor 8 (MSTN).